Reading from the N-terminus, the 119-residue chain is Holo-[acyl-carrier-protein] synthase (119 aa).

Mg(2+) contacts are provided by D8 and E58.

It belongs to the P-Pant transferase superfamily. AcpS family. The cofactor is Mg(2+).

Its subcellular location is the cytoplasm. The catalysed reaction is apo-[ACP] + CoA = holo-[ACP] + adenosine 3',5'-bisphosphate + H(+). Functionally, transfers the 4'-phosphopantetheine moiety from coenzyme A to a Ser of acyl-carrier-protein. The chain is Holo-[acyl-carrier-protein] synthase from Streptococcus thermophilus (strain ATCC BAA-491 / LMD-9).